A 305-amino-acid polypeptide reads, in one-letter code: tRNA dimethylallyltransferase (305 aa).

An ATP-binding site is contributed by 11-18 (GPTAVGKT). 13 to 18 (TAVGKT) serves as a coordination point for substrate. Residues 36–39 (DSMQ) are interaction with substrate tRNA.

This sequence belongs to the IPP transferase family. As to quaternary structure, monomer. It depends on Mg(2+) as a cofactor.

The catalysed reaction is adenosine(37) in tRNA + dimethylallyl diphosphate = N(6)-dimethylallyladenosine(37) in tRNA + diphosphate. Catalyzes the transfer of a dimethylallyl group onto the adenine at position 37 in tRNAs that read codons beginning with uridine, leading to the formation of N6-(dimethylallyl)adenosine (i(6)A). In Listeria monocytogenes serovar 1/2a (strain ATCC BAA-679 / EGD-e), this protein is tRNA dimethylallyltransferase.